The sequence spans 162 residues: Phosphopantetheine adenylyltransferase (162 aa).

Thr10 is a binding site for substrate. ATP is bound by residues 10–11 (TF) and His18. Residues Lys42, Leu74, and Arg88 each coordinate substrate. ATP contacts are provided by residues 89-91 (GLR), Glu99, and 124-130 (YAFLSSS).

This sequence belongs to the bacterial CoaD family. As to quaternary structure, homohexamer. Requires Mg(2+) as cofactor.

It localises to the cytoplasm. It carries out the reaction (R)-4'-phosphopantetheine + ATP + H(+) = 3'-dephospho-CoA + diphosphate. It functions in the pathway cofactor biosynthesis; coenzyme A biosynthesis; CoA from (R)-pantothenate: step 4/5. In terms of biological role, reversibly transfers an adenylyl group from ATP to 4'-phosphopantetheine, yielding dephospho-CoA (dPCoA) and pyrophosphate. The chain is Phosphopantetheine adenylyltransferase from Methylococcus capsulatus (strain ATCC 33009 / NCIMB 11132 / Bath).